Reading from the N-terminus, the 130-residue chain is uncharacterized protein (130 aa).

This is an uncharacterized protein from Escherichia coli (strain K12).